The primary structure comprises 245 residues: Ribosomal RNA small subunit methyltransferase G (245 aa).

Residues Gly-85, Phe-90, Asp-108–Thr-110, Ala-136–Glu-137, and Arg-155 each bind S-adenosyl-L-methionine.

This sequence belongs to the methyltransferase superfamily. RNA methyltransferase RsmG family.

It is found in the cytoplasm. Its function is as follows. Specifically methylates the N7 position of a guanine in 16S rRNA. This Trichormus variabilis (strain ATCC 29413 / PCC 7937) (Anabaena variabilis) protein is Ribosomal RNA small subunit methyltransferase G.